The sequence spans 125 residues: Crustacean hyperglycemic hormones 5 (125 aa).

The signal sequence occupies residues methionine 1–threonine 34. Intrachain disulfides connect cysteine 58-cysteine 94, cysteine 74-cysteine 90, and cysteine 77-cysteine 103. At valine 123 the chain carries Valine amide.

This sequence belongs to the arthropod CHH/MIH/GIH/VIH hormone family. Produced by the medulla terminalis X-organ in the eyestalks and transported to the sinus gland where they are stored and released.

It is found in the secreted. Functionally, hormone found in the sinus gland of isopods and decapods which controls the blood sugar level. Has a secretagogue action over the amylase released from the midgut gland. May act as a stress hormone and may be involved in the control of molting and reproduction. The polypeptide is Crustacean hyperglycemic hormones 5 (Penaeus japonicus (Kuruma prawn)).